The primary structure comprises 225 residues: Putative 5'-nucleotidase alr3139 (225 aa).

A divalent metal cation-binding residues include Asp8, Asp9, Ser37, and Asn88.

It belongs to the SurE nucleotidase family. A divalent metal cation is required as a cofactor.

Its subcellular location is the cytoplasm. It catalyses the reaction a ribonucleoside 5'-phosphate + H2O = a ribonucleoside + phosphate. Nucleotidase that shows phosphatase activity on nucleoside 5'-monophosphates. This chain is Putative 5'-nucleotidase alr3139, found in Synechocystis sp. (strain ATCC 27184 / PCC 6803 / Kazusa).